A 219-amino-acid polypeptide reads, in one-letter code: Ribosomal RNA small subunit methyltransferase G (219 aa).

S-adenosyl-L-methionine is bound by residues glycine 78, phenylalanine 83, glycine 129–glutamate 130, and arginine 146.

The protein belongs to the methyltransferase superfamily. RNA methyltransferase RsmG family.

The protein resides in the cytoplasm. The enzyme catalyses guanosine(527) in 16S rRNA + S-adenosyl-L-methionine = N(7)-methylguanosine(527) in 16S rRNA + S-adenosyl-L-homocysteine. Functionally, specifically methylates the N7 position of guanine in position 527 of 16S rRNA. In Geotalea uraniireducens (strain Rf4) (Geobacter uraniireducens), this protein is Ribosomal RNA small subunit methyltransferase G.